A 256-amino-acid polypeptide reads, in one-letter code: Tryptophan synthase alpha chain (256 aa).

Catalysis depends on proton acceptor residues E45 and D56.

This sequence belongs to the TrpA family. Tetramer of two alpha and two beta chains.

It catalyses the reaction (1S,2R)-1-C-(indol-3-yl)glycerol 3-phosphate + L-serine = D-glyceraldehyde 3-phosphate + L-tryptophan + H2O. It participates in amino-acid biosynthesis; L-tryptophan biosynthesis; L-tryptophan from chorismate: step 5/5. Its function is as follows. The alpha subunit is responsible for the aldol cleavage of indoleglycerol phosphate to indole and glyceraldehyde 3-phosphate. The polypeptide is Tryptophan synthase alpha chain (Christiangramia forsetii (strain DSM 17595 / CGMCC 1.15422 / KT0803) (Gramella forsetii)).